Consider the following 157-residue polypeptide: uncharacterized protein (157 aa).

This is an uncharacterized protein from Schizosaccharomyces pombe (strain 972 / ATCC 24843) (Fission yeast).